Consider the following 298-residue polypeptide: Protein ABIL1 (298 aa).

It belongs to the ABI family. Binds SCAR2. In terms of tissue distribution, expressed in seedlings, roots, hypocotyls, cotyledons, leaves, stems, and flowers.

Its subcellular location is the cytoplasm. The protein resides in the cytoskeleton. In terms of biological role, involved in regulation of actin and microtubule organization. Part of a WAVE complex that activates the Arp2/3 complex. The chain is Protein ABIL1 (ABIL1) from Arabidopsis thaliana (Mouse-ear cress).